Here is a 567-residue protein sequence, read N- to C-terminus: 2-succinyl-5-enolpyruvyl-6-hydroxy-3-cyclohexene-1-carboxylate synthase (567 aa).

The protein belongs to the TPP enzyme family. MenD subfamily. As to quaternary structure, homodimer. Requires Mg(2+) as cofactor. Mn(2+) serves as cofactor. Thiamine diphosphate is required as a cofactor.

It catalyses the reaction isochorismate + 2-oxoglutarate + H(+) = 5-enolpyruvoyl-6-hydroxy-2-succinyl-cyclohex-3-ene-1-carboxylate + CO2. Its pathway is quinol/quinone metabolism; 1,4-dihydroxy-2-naphthoate biosynthesis; 1,4-dihydroxy-2-naphthoate from chorismate: step 2/7. The protein operates within quinol/quinone metabolism; menaquinone biosynthesis. Functionally, catalyzes the thiamine diphosphate-dependent decarboxylation of 2-oxoglutarate and the subsequent addition of the resulting succinic semialdehyde-thiamine pyrophosphate anion to isochorismate to yield 2-succinyl-5-enolpyruvyl-6-hydroxy-3-cyclohexene-1-carboxylate (SEPHCHC). The protein is 2-succinyl-5-enolpyruvyl-6-hydroxy-3-cyclohexene-1-carboxylate synthase of Yersinia pseudotuberculosis serotype O:1b (strain IP 31758).